The following is a 61-amino-acid chain: UPF0434 protein PFLU_3771 (61 aa).

It belongs to the UPF0434 family.

This is UPF0434 protein PFLU_3771 from Pseudomonas fluorescens (strain SBW25).